The primary structure comprises 590 residues: Methionine--tRNA ligase, mitochondrial (590 aa).

Residues 1–26 constitute a mitochondrion transit peptide; the sequence is MRTRFLFLTSGCKAVPELHKIVLANA. The 'HIGH' region signature appears at 51 to 61; that stretch reads FYVNASPHLGH. The 'KMSKS' region motif lies at 342–346; that stretch reads KMSKS. Lys-345 serves as a coordination point for ATP. The interval 570–590 is disordered; the sequence is LESQRADQQKNRKMEKGSNLK. Basic and acidic residues predominate over residues 571–590; that stretch reads ESQRADQQKNRKMEKGSNLK.

Belongs to the class-I aminoacyl-tRNA synthetase family.

Its subcellular location is the mitochondrion matrix. The enzyme catalyses tRNA(Met) + L-methionine + ATP = L-methionyl-tRNA(Met) + AMP + diphosphate. The sequence is that of Methionine--tRNA ligase, mitochondrial (mars2) from Takifugu rubripes (Japanese pufferfish).